A 926-amino-acid polypeptide reads, in one-letter code: OTU domain-containing protein 7A (926 aa).

The residue at position 121 (Ser-121) is a Phosphoserine. The tract at residues Glu-170–Trp-413 is TRAF-binding. The catalytic stretch occupies residues Ala-185 to Thr-452. The OTU domain occupies Leu-201–Met-377. Residue Asp-209 is part of the active site. Catalysis depends on Cys-212, which acts as the Nucleophile. The active-site Proton acceptor is His-370. 3 disordered regions span residues Pro-455–Ala-517, Gly-540–Trp-615, and Glu-671–Ser-779. Over residues Val-484–Lys-494 the composition is skewed to low complexity. The segment covering Asn-495–Ala-513 has biased composition (basic and acidic residues). Residues Lys-497 to Arg-512 carry the Nuclear localization signal motif. Composition is skewed to low complexity over residues Gly-579–Thr-595, Ala-680–Thr-691, and Ser-731–Pro-750. The span at Gly-751–Thr-767 shows a compositional bias: gly residues. Arg-880 is subject to Omega-N-methylarginine. The A20-type zinc-finger motif lies at Gly-884 to Arg-919. Residues Cys-890, Cys-895, Cys-907, and Cys-910 each contribute to the Zn(2+) site.

Belongs to the peptidase C64 family.

The protein localises to the cytoplasm. It is found in the nucleus. The catalysed reaction is Thiol-dependent hydrolysis of ester, thioester, amide, peptide and isopeptide bonds formed by the C-terminal Gly of ubiquitin (a 76-residue protein attached to proteins as an intracellular targeting signal).. Deubiquitinase, which cleaves 'Lys-11'-linked polyubiquitin chains. This Mus musculus (Mouse) protein is OTU domain-containing protein 7A (Otud7a).